A 468-amino-acid chain; its full sequence is tRNA modification GTPase MnmE (468 aa).

The (6S)-5-formyl-5,6,7,8-tetrahydrofolate site is built by Arg-29, Glu-97, and Lys-136. Residues 232–390 (GFELAIVGRP…VVAHIVARME (159 aa)) form the TrmE-type G domain. Asn-242 contacts K(+). GTP is bound by residues 242–247 (NVGKSS), 261–267 (TDLAGTT), and 286–289 (DTAG). A Mg(2+)-binding site is contributed by Ser-246. K(+)-binding residues include Thr-261, Leu-263, and Thr-266. Residue Thr-267 participates in Mg(2+) binding. Position 468 (Lys-468) interacts with (6S)-5-formyl-5,6,7,8-tetrahydrofolate.

It belongs to the TRAFAC class TrmE-Era-EngA-EngB-Septin-like GTPase superfamily. TrmE GTPase family. Homodimer. Heterotetramer of two MnmE and two MnmG subunits. Requires K(+) as cofactor.

It is found in the cytoplasm. Exhibits a very high intrinsic GTPase hydrolysis rate. Involved in the addition of a carboxymethylaminomethyl (cmnm) group at the wobble position (U34) of certain tRNAs, forming tRNA-cmnm(5)s(2)U34. This Magnetococcus marinus (strain ATCC BAA-1437 / JCM 17883 / MC-1) protein is tRNA modification GTPase MnmE.